The chain runs to 106 residues: EspC protein homolog (106 aa).

Belongs to the EspC family.

This chain is EspC protein homolog, found in Mycobacterium leprae (strain TN).